The following is a 1145-amino-acid chain: Cation channel sperm-associated auxiliary subunit gamma 2 (1145 aa).

An N-terminal signal peptide occupies residues 1–38 (MVSRPAMSPVSPVWPRKPNLWAFWVLRLVLLLSLKSWA). The Extracellular portion of the chain corresponds to 39-1061 (EDALQHCTWL…IHGLPLSSKR (1023 aa)). 2 cysteine pairs are disulfide-bonded: Cys-45-Cys-106 and Cys-160-Cys-166. An N-linked (GlcNAc...) asparagine glycan is attached at Asn-103. Asn-178 is a glycosylation site (N-linked (GlcNAc...) asparagine). Cys-289 and Cys-344 form a disulfide bridge. N-linked (GlcNAc...) asparagine glycans are attached at residues Asn-356, Asn-402, Asn-672, and Asn-743. 6 cysteine pairs are disulfide-bonded: Cys-395–Cys-403, Cys-634–Cys-856, Cys-802–Cys-830, Cys-878–Cys-1042, Cys-905–Cys-914, and Cys-1006–Cys-1012. N-linked (GlcNAc...) asparagine glycosylation occurs at Asn-1038. Residues 1062–1083 (TSFIVMVSTSFFIALVVFYILF) form a helical membrane-spanning segment. The Cytoplasmic portion of the chain corresponds to 1084-1145 (CLVWPHIVKA…KEDNVQAKTA (62 aa)).

This sequence belongs to the CATSPERG family. In terms of assembly, component of the CatSper complex or CatSpermasome composed of the core pore-forming members CATSPER1, CATSPER2, CATSPER3 and CATSPER4 as well as auxiliary members CATSPERB, CATSPERG2, CATSPERD, CATSPERE, CATSPERZ, C2CD6/CATSPERT, SLCO6C1, TMEM249, TMEM262 and EFCAB9. HSPA1 may be an additional auxiliary complex member. The core complex members CATSPER1, CATSPER2, CATSPER3 and CATSPER4 form a heterotetrameric channel. The auxiliary CATSPERB, CATSPERG2, CATSPERD and CATSPERE subunits form a pavilion-like structure over the pore which stabilizes the complex through interactions with CATSPER4, CATSPER3, CATSPER1 and CATSPER2 respectively. SLCO6C1 interacts with CATSPERE and TMEM262/CATSPERH interacts with CATSPERB, further stabilizing the complex. C2CD6/CATSPERT interacts at least with CATSPERD and is required for targeting the CatSper complex in the flagellar membrane. Testis-specific. Specifically expressed in the principal piece of the sperm tail (at protein level). Expressed in spermatocytes and spermatids within the seminiferous tubule but not in interstitial cells.

Its subcellular location is the cell projection. The protein resides in the cilium. It is found in the flagellum membrane. Its function is as follows. Auxiliary component of the CatSper complex, a complex involved in sperm cell hyperactivation. Sperm cell hyperactivation is needed for sperm motility which is essential late in the preparation of sperm for fertilization. The polypeptide is Cation channel sperm-associated auxiliary subunit gamma 2 (Mus musculus (Mouse)).